A 385-amino-acid polypeptide reads, in one-letter code: Digeranylgeranylglycerophospholipid reductase 2 (385 aa).

Residues Ala-13, Glu-32, Cys-43, Ala-44, Gly-46, Arg-95, Ala-119, Asp-273, Gly-285, and Ile-286 each contribute to the FAD site.

It belongs to the geranylgeranyl reductase family. DGGGPL reductase subfamily. The cofactor is FAD.

It carries out the reaction a 2,3-bis-O-phytanyl-sn-glycerol 1-phospholipid + 8 A = a 2,3-bis-O-(geranylgeranyl)-sn-glycerol 1-phospholipid + 8 AH2. It catalyses the reaction 2,3-bis-O-(phytanyl)-sn-glycerol 1-phosphate + 8 A = 2,3-bis-O-(geranylgeranyl)-sn-glycerol 1-phosphate + 8 AH2. The enzyme catalyses CDP-2,3-bis-O-(geranylgeranyl)-sn-glycerol + 8 AH2 = CDP-2,3-bis-O-(phytanyl)-sn-glycerol + 8 A. The catalysed reaction is archaetidylserine + 8 AH2 = 2,3-bis-O-phytanyl-sn-glycero-3-phospho-L-serine + 8 A. It functions in the pathway membrane lipid metabolism; glycerophospholipid metabolism. In terms of biological role, is involved in the reduction of 2,3-digeranylgeranylglycerophospholipids (unsaturated archaeols) into 2,3-diphytanylglycerophospholipids (saturated archaeols) in the biosynthesis of archaeal membrane lipids. Catalyzes the formation of archaetidic acid (2,3-di-O-phytanyl-sn-glyceryl phosphate) from 2,3-di-O-geranylgeranylglyceryl phosphate (DGGGP) via the hydrogenation of each double bond of the isoprenoid chains. Is also probably able to reduce double bonds of geranyl groups in CDP-2,3-bis-O-(geranylgeranyl)-sn-glycerol and archaetidylserine, thus acting at various stages in the biosynthesis of archaeal membrane lipids. In Methanothermobacter thermautotrophicus (strain ATCC 29096 / DSM 1053 / JCM 10044 / NBRC 100330 / Delta H) (Methanobacterium thermoautotrophicum), this protein is Digeranylgeranylglycerophospholipid reductase 2.